The following is a 221-amino-acid chain: Thiamine-phosphate synthase (221 aa).

4-amino-2-methyl-5-(diphosphooxymethyl)pyrimidine contacts are provided by residues 46 to 50 (QFREK) and N82. The Mg(2+) site is built by D83 and D102. S121 lines the 4-amino-2-methyl-5-(diphosphooxymethyl)pyrimidine pocket. 2-[(2R,5Z)-2-carboxy-4-methylthiazol-5(2H)-ylidene]ethyl phosphate is bound at residue 148 to 150 (TQS). K151 is a binding site for 4-amino-2-methyl-5-(diphosphooxymethyl)pyrimidine. 2-[(2R,5Z)-2-carboxy-4-methylthiazol-5(2H)-ylidene]ethyl phosphate is bound by residues G180 and 200-201 (IS).

It belongs to the thiamine-phosphate synthase family. Mg(2+) serves as cofactor.

The catalysed reaction is 2-[(2R,5Z)-2-carboxy-4-methylthiazol-5(2H)-ylidene]ethyl phosphate + 4-amino-2-methyl-5-(diphosphooxymethyl)pyrimidine + 2 H(+) = thiamine phosphate + CO2 + diphosphate. The enzyme catalyses 2-(2-carboxy-4-methylthiazol-5-yl)ethyl phosphate + 4-amino-2-methyl-5-(diphosphooxymethyl)pyrimidine + 2 H(+) = thiamine phosphate + CO2 + diphosphate. It carries out the reaction 4-methyl-5-(2-phosphooxyethyl)-thiazole + 4-amino-2-methyl-5-(diphosphooxymethyl)pyrimidine + H(+) = thiamine phosphate + diphosphate. It participates in cofactor biosynthesis; thiamine diphosphate biosynthesis; thiamine phosphate from 4-amino-2-methyl-5-diphosphomethylpyrimidine and 4-methyl-5-(2-phosphoethyl)-thiazole: step 1/1. Functionally, condenses 4-methyl-5-(beta-hydroxyethyl)thiazole monophosphate (THZ-P) and 2-methyl-4-amino-5-hydroxymethyl pyrimidine pyrophosphate (HMP-PP) to form thiamine monophosphate (TMP). This chain is Thiamine-phosphate synthase, found in Pasteurella multocida (strain Pm70).